We begin with the raw amino-acid sequence, 179 residues long: ATP synthase subunit delta (179 aa).

It belongs to the ATPase delta chain family. In terms of assembly, F-type ATPases have 2 components, F(1) - the catalytic core - and F(0) - the membrane proton channel. F(1) has five subunits: alpha(3), beta(3), gamma(1), delta(1), epsilon(1). F(0) has three main subunits: a(1), b(2) and c(10-14). The alpha and beta chains form an alternating ring which encloses part of the gamma chain. F(1) is attached to F(0) by a central stalk formed by the gamma and epsilon chains, while a peripheral stalk is formed by the delta and b chains.

The protein localises to the cell inner membrane. Its function is as follows. F(1)F(0) ATP synthase produces ATP from ADP in the presence of a proton or sodium gradient. F-type ATPases consist of two structural domains, F(1) containing the extramembraneous catalytic core and F(0) containing the membrane proton channel, linked together by a central stalk and a peripheral stalk. During catalysis, ATP synthesis in the catalytic domain of F(1) is coupled via a rotary mechanism of the central stalk subunits to proton translocation. Functionally, this protein is part of the stalk that links CF(0) to CF(1). It either transmits conformational changes from CF(0) to CF(1) or is implicated in proton conduction. The polypeptide is ATP synthase subunit delta (Polaromonas naphthalenivorans (strain CJ2)).